The chain runs to 260 residues: uncharacterized protein (260 aa).

This sequence belongs to the MG032/MG096/MG288 family.

This is an uncharacterized protein from Mycoplasma pneumoniae (strain ATCC 29342 / M129 / Subtype 1) (Mycoplasmoides pneumoniae).